The following is an 862-amino-acid chain: MSSGLKKKGLEWDLNDWRWDSNLFLATPSNASPSKCSRRELGRAEGEIDFGVVDKRRRVSPEDDDGEECINAATTNGDDGQISGQRGRSSEDEMPRQGTCSSSGPCCQVDGCTVNLSSARDYNKRHKVCEVHTKSGVVRIKNVEHRFCQQCSRFHFLQEFDEGKKSCRSRLAQHNRRRRKVQVQAGVDVNSLHENHSLSNTLLLLLKQLSGLDSSGPSEQINGPNYLTNLVKNLAALAGTQRNQDMLKNANSAAIASHTGNYVAKGNSLHDSRPHIPVGTESTAEEPTVERRVQNFDLNDAYVEGDENRTDKIVFKLFGKEPNDFPSDLRAQILSWLSNCPSDIESYIRPGCIILTIYMRLPNWMWDKLAADPAHWIQKLISLSTDTLWRTGWMYARVQDYLTLSCNGNLMLASPWQPAIGNKHQILFITPIAVACSSTANFSVKGLNIAQPTTKLLCIFGGKYLIQEATEKLLDDTKMQRGPQCLTFSCSFPSTSGRGFIEVEDLDQSSLSFPFVVAEEDVCSEIRTLEHLLNLVSFDDTLVEKNDLLASRDRALNFLHEFGWFLQRSHIRATSETPKDCTEGFPAARFRWLLSFAVDREFCAVIKKLLDTLFQGGVDLDVQSTVEFVLKQDLVFVAVNKRSKPLIDFLLTYTTSSAPMDGTESAAPAQFLFTPDIAGPSDITPLHIAATYSDTAGVLDALTDDPQQLGIKAWKNARDATGLTPEDYARKRGHESYIEMVQNKIDSRLPKAHVSVTISSTTSTTDFTEKHASQSKTTDQTAFDVEKGQQISTKPPLSCRQCLPELAYRHHLNRFLSTRPAVLSLVAIAAVCVCVGLIMQGPPHIGGMRGPFRWNSLRSGPK.

The tract at residues 55-98 (KRRRVSPEDDDGEECINAATTNGDDGQISGQRGRSSEDEMPRQG) is disordered. Residues 72-87 (AATTNGDDGQISGQRG) are compositionally biased toward polar residues. The SBP-type zinc finger occupies 104–181 (GPCCQVDGCT…AQHNRRRRKV (78 aa)). 8 residues coordinate Zn(2+): Cys-107, Cys-112, Cys-129, His-132, Cys-148, Cys-151, His-155, and Cys-167. Residues 164-180 (KKSCRSRLAQHNRRRRK) carry the Bipartite nuclear localization signal motif.

As to expression, ubiquitous.

The protein localises to the nucleus. Trans-acting factor that binds specifically to the consensus nucleotide sequence 5'-TNCGTACAA-3'. The chain is Squamosa promoter-binding-like protein 1 (SPL1) from Oryza sativa subsp. japonica (Rice).